Reading from the N-terminus, the 491-residue chain is Probable cytosol aminopeptidase (491 aa).

Mn(2+) contacts are provided by K264 and D269. Residue K276 is part of the active site. Mn(2+) is bound by residues D287, D346, and E348. Residue R350 is part of the active site.

This sequence belongs to the peptidase M17 family. Mn(2+) is required as a cofactor.

It is found in the cytoplasm. It catalyses the reaction Release of an N-terminal amino acid, Xaa-|-Yaa-, in which Xaa is preferably Leu, but may be other amino acids including Pro although not Arg or Lys, and Yaa may be Pro. Amino acid amides and methyl esters are also readily hydrolyzed, but rates on arylamides are exceedingly low.. It carries out the reaction Release of an N-terminal amino acid, preferentially leucine, but not glutamic or aspartic acids.. Its function is as follows. Presumably involved in the processing and regular turnover of intracellular proteins. Catalyzes the removal of unsubstituted N-terminal amino acids from various peptides. The chain is Probable cytosol aminopeptidase from Xylella fastidiosa (strain M12).